A 114-amino-acid polypeptide reads, in one-letter code: uncharacterized protein (114 aa).

To E.coli YfiI and P.aeruginosa RluD.

This is an uncharacterized protein from Escherichia coli O6:H1 (strain CFT073 / ATCC 700928 / UPEC).